Consider the following 322-residue polypeptide: MQLKNSMLLLTALAAGSSVARLHGHERRHLHHAGEKREVGDTVYATINGVLVSWINEWSGEAKTSDAPVSQATPVSNAVAAAAAASTPEPSSSHSDSSSSSGVSADWTNTPAEGEYCTDGFGGRTEPSGSGIFYKGNVGKPWGSNIIEVSPENAKKYKHVAQFVGSDTDPWTVVFWNKIGPDGGLTGWYGNSALTLHLEAGETKYVAFDENSQGAWGAAKGDELPKDQFGGYSCTWGEFDFDSKINQGWSGWDVSAIQAENAHHEVQGMKICNHAGELCSIISHGLSKVIDAYTADLAGVDGIGGKVVPGPTRLVVNLDYKE.

The N-terminal stretch at 1 to 20 (MQLKNSMLLLTALAAGSSVA) is a signal peptide. Positions 80 to 105 (AAAAAASTPEPSSSHSDSSSSSGVSA) are enriched in low complexity. The segment at 80–109 (AAAAAASTPEPSSSHSDSSSSSGVSADWTN) is disordered.

It is found in the secreted. This chain is Allergen Asp f 4, found in Aspergillus fumigatus (strain ATCC MYA-4609 / CBS 101355 / FGSC A1100 / Af293) (Neosartorya fumigata).